Consider the following 591-residue polypeptide: V-type ATP synthase alpha chain (591 aa).

233–240 (GPFGAGKT) is an ATP binding site.

Belongs to the ATPase alpha/beta chains family.

The catalysed reaction is ATP + H2O + 4 H(+)(in) = ADP + phosphate + 5 H(+)(out). Functionally, produces ATP from ADP in the presence of a proton gradient across the membrane. The V-type alpha chain is a catalytic subunit. This is V-type ATP synthase alpha chain from Streptococcus pyogenes serotype M5 (strain Manfredo).